The following is a 478-amino-acid chain: NADH-quinone oxidoreductase subunit N (478 aa).

Transmembrane regions (helical) follow at residues 8–28 (LVLP…FGVW), 38–58 (ILWA…LGTG), 62–82 (AFGG…VILV), 106–126 (PILI…GDLM), 160–180 (FVLG…VYGF), 200–220 (IGLL…VSAV), 234–254 (PTPV…ALIA), 268–288 (WGQI…IAGI), 300–320 (SSIS…AAGV), 322–342 (SMLL…AFIL), 368–388 (AFAL…LGFF), 398–418 (IGAG…IGAF), and 445–465 (FAFL…MAGV).

The protein belongs to the complex I subunit 2 family. In terms of assembly, NDH-1 is composed of 14 different subunits. Subunits NuoA, H, J, K, L, M, N constitute the membrane sector of the complex.

The protein resides in the cellular chromatophore membrane. The enzyme catalyses a quinone + NADH + 5 H(+)(in) = a quinol + NAD(+) + 4 H(+)(out). Functionally, NDH-1 shuttles electrons from NADH, via FMN and iron-sulfur (Fe-S) centers, to quinones in the respiratory chain. The immediate electron acceptor for the enzyme in this species is believed to be ubiquinone. Couples the redox reaction to proton translocation (for every two electrons transferred, four hydrogen ions are translocated across the cytoplasmic membrane), and thus conserves the redox energy in a proton gradient. This Rhodobacter capsulatus (Rhodopseudomonas capsulata) protein is NADH-quinone oxidoreductase subunit N.